We begin with the raw amino-acid sequence, 581 residues long: Mitosis inhibitor protein kinase mik1 (581 aa).

Disordered stretches follow at residues 43–71 (GHEE…HTPM) and 148–178 (NLTN…PLSP). Over residues 59-71 (KPSNTKRSPHTPM) the composition is skewed to polar residues. Over residues 160–169 (PCKKGTKIKL) the composition is skewed to basic residues. One can recognise a Protein kinase domain in the interval 289–561 (FQQVKPIHES…LLAMPEMIFI (273 aa)). Residues 295 to 303 (IHESDFSFV) and K320 each bind ATP. Residue D417 is the Proton acceptor of the active site. Mg(2+) contacts are provided by N422 and D435.

The protein belongs to the protein kinase superfamily. Ser/Thr protein kinase family. WEE1 subfamily.

The enzyme catalyses L-seryl-[protein] + ATP = O-phospho-L-seryl-[protein] + ADP + H(+). The catalysed reaction is L-threonyl-[protein] + ATP = O-phospho-L-threonyl-[protein] + ADP + H(+). Protein kinase that acts both on serines and on tyrosines. It acts as a negative regulator of entry into mitosis (G2 to M transition). Phosphorylates and inhibits cdc2. This Schizosaccharomyces pombe (strain 972 / ATCC 24843) (Fission yeast) protein is Mitosis inhibitor protein kinase mik1 (mik1).